The sequence spans 460 residues: ATP synthase subunit beta (460 aa).

Residue 150–157 participates in ATP binding; that stretch reads GGAGVGKT.

Belongs to the ATPase alpha/beta chains family. F-type ATPases have 2 components, CF(1) - the catalytic core - and CF(0) - the membrane proton channel. CF(1) has five subunits: alpha(3), beta(3), gamma(1), delta(1), epsilon(1). CF(0) has three main subunits: a(1), b(2) and c(9-12). The alpha and beta chains form an alternating ring which encloses part of the gamma chain. CF(1) is attached to CF(0) by a central stalk formed by the gamma and epsilon chains, while a peripheral stalk is formed by the delta and b chains.

It is found in the cell inner membrane. The catalysed reaction is ATP + H2O + 4 H(+)(in) = ADP + phosphate + 5 H(+)(out). Its function is as follows. Produces ATP from ADP in the presence of a proton gradient across the membrane. The catalytic sites are hosted primarily by the beta subunits. The chain is ATP synthase subunit beta from Serratia proteamaculans (strain 568).